The following is a 366-amino-acid chain: Chorismate synthase (366 aa).

Arginine 48 and arginine 54 together coordinate NADP(+). Residues 125–127, 238–239, glycine 278, 293–297, and arginine 319 each bind FMN; these read RSS, NA, and KPTSS.

This sequence belongs to the chorismate synthase family. In terms of assembly, homotetramer. FMNH2 serves as cofactor.

The catalysed reaction is 5-O-(1-carboxyvinyl)-3-phosphoshikimate = chorismate + phosphate. Its pathway is metabolic intermediate biosynthesis; chorismate biosynthesis; chorismate from D-erythrose 4-phosphate and phosphoenolpyruvate: step 7/7. Catalyzes the anti-1,4-elimination of the C-3 phosphate and the C-6 proR hydrogen from 5-enolpyruvylshikimate-3-phosphate (EPSP) to yield chorismate, which is the branch point compound that serves as the starting substrate for the three terminal pathways of aromatic amino acid biosynthesis. This reaction introduces a second double bond into the aromatic ring system. In Neisseria meningitidis serogroup C / serotype 2a (strain ATCC 700532 / DSM 15464 / FAM18), this protein is Chorismate synthase.